The sequence spans 589 residues: Transcription factor MYC4 (589 aa).

The tract at residues 99–150 (NTVLLGWGDGYYKGEEEKSRKKKSNPASAAEQEHRKRVIRELNSLISGGVGG) is JAZ-interaction domain. Disordered regions lie at residues 114-133 (EEKS…QEHR), 291-326 (AAPV…PNPK), 340-359 (IENG…VSNN), and 381-422 (ASVA…EAER). Positions 296 to 308 (NNGGNDSTSNSDS) are enriched in low complexity. Polar residues predominate over residues 309–322 (QPISKLCNGSSVEN). The segment covering 381–398 (ASVAKEAESNRVVVEPEK) has biased composition (basic and acidic residues). Positions 399–408 (KPRKRGRKPA) are enriched in basic residues. A compositionally biased stretch (basic and acidic residues) spans 409 to 422 (NGREEPLNHVEAER). Residues 412-461 (EEPLNHVEAERQRREKLNQRFYSLRAVVPNVSKMDKASLLGDAISYISEL) enclose the bHLH domain.

In terms of assembly, homo- and heterodimer. Interacts with MYB28, MYB29, MYB34, MYB51, MYB76, MYB122, MYC3, AFPH2/NINJA and the JAZ repressors TIFY10A/JAZ1, TIFY10B/JAZ2, TIFY6B/JAZ3, TIFY6A/JAZ4, TIFY11A/JAZ5, TIFY11B/JAZ6, TIFY5B/JAZ7, TIFY5A/JAZ8, TIFY7/JAZ9, TIFY9/JAZ10, TIFY3A/JAZ11 and TIFY3B/JAZ12. As to expression, expressed constitutively at low levels. Preferentially expressed in vascular tissues.

The protein resides in the nucleus. Its function is as follows. Transcription factor involved in jasmonic acid (JA) gene regulation. With MYC2 and MYC3, controls additively subsets of JA-dependent responses. Can form complexes with all known glucosinolate-related MYBs to regulate glucosinolate biosynthesis. Binds to the G-box (5'-CACGTG-3') of promoters. Activates multiple TIFY/JAZ promoters. In Arabidopsis thaliana (Mouse-ear cress), this protein is Transcription factor MYC4 (MYC4).